The chain runs to 252 residues: Aspartate/glutamate leucyltransferase (252 aa).

The protein belongs to the R-transferase family. Bpt subfamily.

The protein localises to the cytoplasm. It catalyses the reaction N-terminal L-glutamyl-[protein] + L-leucyl-tRNA(Leu) = N-terminal L-leucyl-L-glutamyl-[protein] + tRNA(Leu) + H(+). The enzyme catalyses N-terminal L-aspartyl-[protein] + L-leucyl-tRNA(Leu) = N-terminal L-leucyl-L-aspartyl-[protein] + tRNA(Leu) + H(+). In terms of biological role, functions in the N-end rule pathway of protein degradation where it conjugates Leu from its aminoacyl-tRNA to the N-termini of proteins containing an N-terminal aspartate or glutamate. The protein is Aspartate/glutamate leucyltransferase of Hyphomonas neptunium (strain ATCC 15444).